A 549-amino-acid polypeptide reads, in one-letter code: Myotubularin-related protein 9 (549 aa).

M1 carries the post-translational modification N-acetylmethionine. In terms of domain architecture, GRAM spans 4–99 (AELIKTPRVD…LNIASSIEAL (96 aa)). The 376-residue stretch at 123–498 (GWHSFLPEQE…QSLPLWEGIF (376 aa)) folds into the Myotubularin phosphatase domain. Positions 508 to 542 (LDEAYEEMVNIIEYNKELQAKVNILRRQLAELETE) form a coiled coil. Position 548 is a phosphoserine (S548).

This sequence belongs to the protein-tyrosine phosphatase family. Non-receptor class myotubularin subfamily. In terms of assembly, homodimer. Heterodimer (via C-terminus) with lipid phosphatase MTMR6 (via C-terminus). Heterodimer (via coiled coil domain) with lipid phosphatase MTMR7 (via C-terminus). Heterodimer with lipid phosphatase MTMR8. Expressed in many tissues.

Its subcellular location is the cytoplasm. The protein resides in the cell projection. It localises to the ruffle membrane. The protein localises to the perinuclear region. It is found in the endoplasmic reticulum. Its function is as follows. Acts as an adapter for myotubularin-related phosphatases. Increases lipid phosphatase MTMR6 catalytic activity, specifically towards phosphatidylinositol 3,5-bisphosphate and MTMR6 binding affinity for phosphorylated phosphatidylinositols. Positively regulates lipid phosphatase MTMR7 catalytic activity. Increases MTMR8 catalytic activity towards phosphatidylinositol 3-phosphate. The formation of the MTMR6-MTMR9 complex, stabilizes both MTMR6 and MTMR9 protein levels. Stabilizes MTMR8 protein levels. Plays a role in the late stages of macropinocytosis possibly by regulating MTMR6-mediated dephosphorylation of phosphatidylinositol 3-phosphate in membrane ruffles. Negatively regulates autophagy, in part via its association with MTMR8. Negatively regulates DNA damage-induced apoptosis, in part via its association with MTMR6. Does not bind mono-, di- and tri-phosphorylated phosphatidylinositols, phosphatidic acid and phosphatidylserine. The chain is Myotubularin-related protein 9 (MTMR9) from Homo sapiens (Human).